The sequence spans 425 residues: Dihydroorotase (425 aa).

2 residues coordinate Zn(2+): H59 and H61. Residues 61 to 63 (HLR) and N93 contribute to the substrate site. The Zn(2+) site is built by D151, H178, and H231. N277 serves as a coordination point for substrate. A Zn(2+)-binding site is contributed by D304. D304 is an active-site residue. Residues H308 and 322–323 (FG) contribute to the substrate site.

The protein belongs to the metallo-dependent hydrolases superfamily. DHOase family. Class I DHOase subfamily. The cofactor is Zn(2+).

It catalyses the reaction (S)-dihydroorotate + H2O = N-carbamoyl-L-aspartate + H(+). Its pathway is pyrimidine metabolism; UMP biosynthesis via de novo pathway; (S)-dihydroorotate from bicarbonate: step 3/3. In terms of biological role, catalyzes the reversible cyclization of carbamoyl aspartate to dihydroorotate. The sequence is that of Dihydroorotase from Staphylococcus epidermidis (strain ATCC 12228 / FDA PCI 1200).